The chain runs to 590 residues: DNA primase (590 aa).

The CHC2-type zinc-finger motif lies at Cys-37 to Cys-61. Residues Gly-255–Pro-337 enclose the Toprim domain. 3 residues coordinate Mg(2+): Glu-261, Asp-305, and Asp-307.

Belongs to the DnaG primase family. In terms of assembly, monomer. Interacts with DnaB. It depends on Zn(2+) as a cofactor. Requires Mg(2+) as cofactor.

It catalyses the reaction ssDNA + n NTP = ssDNA/pppN(pN)n-1 hybrid + (n-1) diphosphate.. Its function is as follows. RNA polymerase that catalyzes the synthesis of short RNA molecules used as primers for DNA polymerase during DNA replication. The chain is DNA primase from Neisseria meningitidis serogroup B (strain ATCC BAA-335 / MC58).